The sequence spans 192 residues: Transmembrane protein 11, mitochondrial (192 aa).

The tract at residues 1 to 20 (MAAWGRRRLGPGSGGGGARE) is disordered. Transmembrane regions (helical) follow at residues 84-100 (TTVL…LALP) and 107-124 (ISLP…LYGI).

It belongs to the TMEM11 family. Associates with the mitochondrial contact site and cristae organizing system (MICOS) complex, composed of at least MICOS10/MIC10, CHCHD3/MIC19, CHCHD6/MIC25, APOOL/MIC27, IMMT/MIC60, APOO/MIC23/MIC26 and QIL1/MIC13. This complex was also known under the names MINOS or MitOS complex. The MICOS complex associates with mitochondrial outer membrane proteins SAMM50, MTX1, MTX2 and DNAJC11, mitochondrial inner membrane protein TMEM11 and with HSPA9. Interacts with IMMT/MIC60.

It is found in the mitochondrion inner membrane. Functionally, plays a role in mitochondrial morphogenesis. The sequence is that of Transmembrane protein 11, mitochondrial (TMEM11) from Bos taurus (Bovine).